A 1205-amino-acid polypeptide reads, in one-letter code: Plasma membrane calcium-transporting ATPase 4 (1205 aa).

The Cytoplasmic portion of the chain corresponds to 1 to 100 (MTNPPGQSVS…KTFLELVWEA (100 aa)). A helical transmembrane segment spans residues 101–121 (LQDVTLIILEIAAIISLVLSF). The Extracellular portion of the chain corresponds to 122–147 (YRPPGGDNEICGHIASSPEEEEEGET). Residues 148 to 168 (GWIEGAAILASVIIVVLVTAF) form a helical membrane-spanning segment. The Cytoplasmic segment spans residues 169–369 (NDWSKEKQFR…LAVQIGKAGL (201 aa)). The tract at residues 294-318 (DDDDKKKKGKKQGAPENRNKAKTQD) is disordered. Ser-329 and Ser-335 each carry phosphoserine. Residues 370–390 (IMSVLTVVILILYFVVDNFVI) form a helical membrane-spanning segment. The Extracellular segment spans residues 391–409 (QRREWLPECTPVYIQYFVK). The chain crosses the membrane as a helical span at residues 410–430 (FFIIGVTVLVVAVPEGLPLAV). Topologically, residues 431 to 844 (TISLAYSVKK…RNVYDSISKF (414 aa)) are cytoplasmic. The active-site 4-aspartylphosphate intermediate is the Asp-466. The Mg(2+) site is built by Asp-786 and Asp-790. Residues 845–865 (LQFQLTVNVVAVIVAFTGACI) form a helical membrane-spanning segment. Over 866–872 (TQDSPLK) the chain is Extracellular. Residues 873 to 893 (AVQMLWVNLIMDTFASLALAT) traverse the membrane as a helical segment. Over 894–919 (EPPTESLLRRRPYGRNKPLISRTMMK) the chain is Cytoplasmic. Residues 920-942 (NILGHAVYQLLIVFLLVFAGDTL) form a helical membrane-spanning segment. Residues 943–956 (FDIDSGRKAPLNSP) are Extracellular-facing. Residues 957 to 979 (PSQHYTIVFNTFVLMQLFNEINA) form a helical membrane-spanning segment. The Cytoplasmic segment spans residues 980–995 (RKIHGEKNVFAGVYRN). A helical transmembrane segment spans residues 996–1016 (IIFCTVVLGTFFCQIMIVELG). Over 1017-1029 (GKPFSCTSLTMEQ) the chain is Extracellular. Residues 1030-1050 (WMWCLFIGIGELLWGQVISAI) form a helical membrane-spanning segment. Residues 1051–1205 (PTKSLKFLKE…SPLPSLETPV (155 aa)) lie on the Cytoplasmic side of the membrane. Ser-1065 and Ser-1071 each carry phosphoserine. The residue at position 1072 (Arg-1072) is an Omega-N-methylarginine. The tract at residues 1087–1104 (LRRGQILWVRGLNRIQTQ) is calmodulin-binding subdomain A. At Thr-1103 the chain carries Phosphothreonine; by PKC. The segment at 1105-1114 (IRVVKLFHNN) is calmodulin-binding subdomain B. At Ser-1145 the chain carries Phosphoserine.

It belongs to the cation transport ATPase (P-type) (TC 3.A.3) family. Type IIB subfamily. Interacts with PDZD11. Interacts with SLC35G1 and STIM1. Interacts with calmodulin. In terms of tissue distribution, specifically expressed by sperm in testis (at protein level).

Its subcellular location is the membrane. The protein resides in the cell projection. It is found in the cilium. The protein localises to the flagellum membrane. It carries out the reaction Ca(2+)(in) + ATP + H2O = Ca(2+)(out) + ADP + phosphate + H(+). Activated by calcium/calmodulin. Calcium/calmodulin-regulated and magnesium-dependent enzyme that catalyzes the hydrolysis of ATP coupled with the transport of calcium out of the cell. By regulating sperm cell calcium homeostasis, may play a role in sperm motility. This is Plasma membrane calcium-transporting ATPase 4 from Mus musculus (Mouse).